The chain runs to 469 residues: Tetratricopeptide repeat protein 38 (469 aa).

Residue Ala2 is modified to N-acetylalanine. At Ser5 the chain carries Phosphoserine. 3 TPR repeats span residues 108–141 (REQL…HPTD), 180–213 (SYVK…NPTD), and 252–285 (CHNY…SLQA).

It belongs to the TTC38 family.

The polypeptide is Tetratricopeptide repeat protein 38 (TTC38) (Homo sapiens (Human)).